We begin with the raw amino-acid sequence, 432 residues long: Eukaryotic translation initiation factor 3 subunit M (432 aa).

The region spanning 184–356 (EEEEAYQHIL…KVFLIHSVRY (173 aa)) is the PCI domain. Composition is skewed to basic and acidic residues over residues 392-401 (AQQEAERKLV) and 423-432 (QHRERNDNDD). Positions 392-432 (AQQEAERKLVEASTQHNNDRGNQRRGGNRGQQHRERNDNDD) are disordered.

This sequence belongs to the eIF-3 subunit M family. As to quaternary structure, component of the eukaryotic translation initiation factor 3 (eIF-3) complex.

The protein localises to the cytoplasm. Functionally, component of the eukaryotic translation initiation factor 3 (eIF-3) complex, which is involved in protein synthesis of a specialized repertoire of mRNAs and, together with other initiation factors, stimulates binding of mRNA and methionyl-tRNAi to the 40S ribosome. The eIF-3 complex specifically targets and initiates translation of a subset of mRNAs involved in cell proliferation. The sequence is that of Eukaryotic translation initiation factor 3 subunit M from Pyricularia oryzae (strain 70-15 / ATCC MYA-4617 / FGSC 8958) (Rice blast fungus).